Here is a 325-residue protein sequence, read N- to C-terminus: N-acetyl-gamma-glutamyl-phosphate reductase (325 aa).

C135 is an active-site residue.

It belongs to the NAGSA dehydrogenase family. Type 1 subfamily.

Its subcellular location is the cytoplasm. It carries out the reaction N-acetyl-L-glutamate 5-semialdehyde + phosphate + NADP(+) = N-acetyl-L-glutamyl 5-phosphate + NADPH + H(+). It functions in the pathway amino-acid biosynthesis; L-arginine biosynthesis; N(2)-acetyl-L-ornithine from L-glutamate: step 3/4. Functionally, catalyzes the NADPH-dependent reduction of N-acetyl-5-glutamyl phosphate to yield N-acetyl-L-glutamate 5-semialdehyde. The chain is N-acetyl-gamma-glutamyl-phosphate reductase from Karelsulcia muelleri (strain GWSS) (Sulcia muelleri).